Here is an 823-residue protein sequence, read N- to C-terminus: Apoptosis-resistant E3 ubiquitin protein ligase 1 (823 aa).

Residues 64–158 (WDWKDPYEVG…VAYSPYYKIF (95 aa)) form a Filamin repeat. Positions 315–345 (PPMHMSSSQRRPSTAIEEDDEDSPSECHTPE) are disordered. Positions 483–789 (SISDWSKNFE…THSTLPTAHT (307 aa)) are interaction with SOCS2. One can recognise an HECT domain in the interval 483–823 (SISDWSKNFE…SEGCEGFGML (341 aa)). The active-site Glycyl thioester intermediate is the Cys-790.

Interacts with SOCS2. Interacts (via HECT domain) with HTRA2, DIABLO/SMAC and SEPTIN4; in the cytoplasm following induction of apoptosis. Post-translationally, autoubiquitinated in vitro in the presence of E2 enzyme UBE2D1/UBCH5A. As to expression, detected in brain, testis, heart, liver, lung and kidney with very low levels in skeletal muscle and spleen.

The catalysed reaction is S-ubiquitinyl-[E2 ubiquitin-conjugating enzyme]-L-cysteine + [acceptor protein]-L-lysine = [E2 ubiquitin-conjugating enzyme]-L-cysteine + N(6)-ubiquitinyl-[acceptor protein]-L-lysine.. It participates in protein modification; protein ubiquitination. Functionally, E3 ubiquitin-protein ligase that catalyzes 'Lys-11'- or 'Lys-33'-linked polyubiquitin chains, with some preference for 'Lys-33' linkages. E3 ubiquitin-protein ligases accept ubiquitin from an E2 ubiquitin-conjugating enzyme in the form of a thioester and then directly transfers the ubiquitin to targeted substrates. Ubiquitinates SEPTIN4, DIABLO/SMAC and HTRA2 in vitro. Modulates pulmonary inflammation by targeting SOCS2 for ubiquitination and subsequent degradation by the proteasome. This is Apoptosis-resistant E3 ubiquitin protein ligase 1 (Arel1) from Mus musculus (Mouse).